A 317-amino-acid polypeptide reads, in one-letter code: Proline iminopeptidase (317 aa).

An AB hydrolase-1 domain is found at 41 to 296 (VFIHGGPGGG…ELHIVEGAGH (256 aa)). Ser113 functions as the Nucleophile in the catalytic mechanism. Asp268 is an active-site residue. His296 acts as the Proton donor in catalysis.

The protein belongs to the peptidase S33 family. Monomer.

The protein localises to the cytoplasm. The enzyme catalyses Release of N-terminal proline from a peptide.. Its function is as follows. Specifically catalyzes the removal of N-terminal proline residues from peptides. This is Proline iminopeptidase (pip) from Serratia marcescens.